The following is a 201-amino-acid chain: Proteasome subunit beta type-2 (201 aa).

Met-1 is modified (N-acetylmethionine).

Belongs to the peptidase T1B family. As to quaternary structure, the 26S proteasome consists of a 20S proteasome core and two 19S regulatory subunits. The 20S proteasome core is a barrel-shaped complex made of 28 subunits that are arranged in four stacked rings. The two outer rings are each formed by seven alpha subunits, and the two inner rings are formed by seven beta subunits. The proteolytic activity is exerted by three beta-subunits PSMB5, PSMB6 and PSMB7.

It is found in the cytoplasm. It localises to the nucleus. In terms of biological role, non-catalytic component of the 20S core proteasome complex involved in the proteolytic degradation of most intracellular proteins. This complex plays numerous essential roles within the cell by associating with different regulatory particles. Associated with two 19S regulatory particles, forms the 26S proteasome and thus participates in the ATP-dependent degradation of ubiquitinated proteins. The 26S proteasome plays a key role in the maintenance of protein homeostasis by removing misfolded or damaged proteins that could impair cellular functions, and by removing proteins whose functions are no longer required. Associated with the PA200 or PA28, the 20S proteasome mediates ubiquitin-independent protein degradation. This type of proteolysis is required in several pathways including spermatogenesis (20S-PA200 complex) or generation of a subset of MHC class I-presented antigenic peptides (20S-PA28 complex). The chain is Proteasome subunit beta type-2 (PSMB2) from Bos taurus (Bovine).